The chain runs to 391 residues: uncharacterized protein (391 aa).

Residues 235 to 330 (VFILSRINLL…LYLKNETQKS (96 aa)) enclose the HTH arsR-type domain.

This is an uncharacterized protein from Methanocaldococcus jannaschii (strain ATCC 43067 / DSM 2661 / JAL-1 / JCM 10045 / NBRC 100440) (Methanococcus jannaschii).